We begin with the raw amino-acid sequence, 195 residues long: SPbeta prophage-derived uncharacterized protein YotM (195 aa).

The protein is SPbeta prophage-derived uncharacterized protein YotM (yotM) of Bacillus subtilis (strain 168).